Here is a 285-residue protein sequence, read N- to C-terminus: Probable nudix hydrolase C6G9.05 (285 aa).

Residues 114-254 (TRFASVLMPL…DLLYVEFNID (141 aa)) enclose the Nudix hydrolase domain. The Nudix box motif lies at 153 to 175 (GRVEPSDGSHYYAALRETYEEIG). 2 residues coordinate Mg(2+): Glu169 and Glu173.

It belongs to the Nudix hydrolase family. PCD1 subfamily. Requires Mn(2+) as cofactor. Mg(2+) serves as cofactor.

Probably mediates the hydrolysis of some nucleoside diphosphate derivatives. The polypeptide is Probable nudix hydrolase C6G9.05 (Schizosaccharomyces pombe (strain 972 / ATCC 24843) (Fission yeast)).